We begin with the raw amino-acid sequence, 276 residues long: uncharacterized protein (276 aa).

Positions 1 to 16 (MELGLILMFASAFVSA) are cleaved as a signal peptide. N-linked (GlcNAc...) asparagine glycosylation is present at N265.

This is an uncharacterized protein from Encephalitozoon cuniculi (strain GB-M1) (Microsporidian parasite).